The chain runs to 534 residues: Chaperonin GroEL 3 (534 aa).

Residues 31–34 (TLGP), G416, 479–481 (NAL), and D495 contribute to the ATP site.

It belongs to the chaperonin (HSP60) family. Forms a cylinder of 14 subunits composed of two heptameric rings stacked back-to-back. Interacts with the co-chaperonin GroES.

It localises to the cytoplasm. It carries out the reaction ATP + H2O + a folded polypeptide = ADP + phosphate + an unfolded polypeptide.. Its function is as follows. Together with its co-chaperonin GroES, plays an essential role in assisting protein folding. The GroEL-GroES system forms a nano-cage that allows encapsulation of the non-native substrate proteins and provides a physical environment optimized to promote and accelerate protein folding. This chain is Chaperonin GroEL 3, found in Protochlamydia amoebophila (strain UWE25).